A 71-amino-acid chain; its full sequence is MGSFSIWHWLIVLVIVALIFGTKKLRNIGSDLGGAVKGFKDGMQEANADKTEQVTQQQTTIDVQAKEKQNS.

Residues 1 to 21 (MGSFSIWHWLIVLVIVALIFG) traverse the membrane as a helical segment. The interval 48–71 (ADKTEQVTQQQTTIDVQAKEKQNS) is disordered.

The protein belongs to the TatA/E family. As to quaternary structure, the Tat system comprises two distinct complexes: a TatABC complex, containing multiple copies of TatA, TatB and TatC subunits, and a separate TatA complex, containing only TatA subunits. Substrates initially bind to the TatABC complex, which probably triggers association of the separate TatA complex to form the active translocon.

It is found in the cell inner membrane. Part of the twin-arginine translocation (Tat) system that transports large folded proteins containing a characteristic twin-arginine motif in their signal peptide across membranes. TatA could form the protein-conducting channel of the Tat system. The sequence is that of Sec-independent protein translocase protein TatA from Bordetella avium (strain 197N).